Consider the following 627-residue polypeptide: MDVIVRRCPFLARVPQAFFQQSKKSLAVYAQRCPFMMELASKPMAPSLARALCSSSSSQQKIEDTMSTGEVLKPKAEAKLPVGLATPPSNEAVAPKCPFLAAEMGQNNSNVVRQVGVEFQEDVEEIRTVQKEVSPAQLEQPSLIGKTMGEEGHQKNLMKSLLKQRPKRVSHLLQDNLPGSFTRFYYDNFFEKKIEEKKSDHTYRVFKTVNRLANEFPMADDFTGSLEDKREVSVWCSNDYLGMSRHPRVAQAIMETLRKHGSGAGGTRNISGTSKFHVELEQELADLHRKDAALLFTSCFVANDSTLFTLAKMLPGCEIYSDAGNHASMIQGIRNSGAKKFIFRHNDVAHLRELLEKGDPTKPKIVAFETVHSMDGAVCPLEEMCDLAHEFGAITFVDEVHAVGLYGPRGGGIGDRDGIMHKMDIISGTLGKAFGCVGGYIASTATLVDTVRSYAAGFIFTTSLPPMLLAGAKQSIQILKGEEGCTLRRKHQRNVKLLRQMLMDSGLPVVHCPSHIIPIRVSDAEKNTKVCDLMMSHHNIYVQAINYPTVARGDELLRIAPTPHHTPEMMKYFVDRLVQTWKEVGLELKPHSSAECTFCQQPLHFEVMNEREKSYFSGLSHLVSVCA.

The N-terminal 58 residues, 1-58 (MDVIVRRCPFLARVPQAFFQQSKKSLAVYAQRCPFMMELASKPMAPSLARALCSSSSS), are a transit peptide targeting the mitochondrion. Substrate is bound by residues arginine 204, serine 321, and lysine 340. Residues serine 373, histidine 401, and threonine 429 each coordinate pyridoxal 5'-phosphate. The active site involves lysine 432. Lysine 432 is modified (N6-(pyridoxal phosphate)lysine). Pyridoxal 5'-phosphate is bound by residues threonine 461 and threonine 462. Threonine 549 provides a ligand contact to substrate.

The protein belongs to the class-II pyridoxal-phosphate-dependent aminotransferase family. Homodimer. The cofactor is pyridoxal 5'-phosphate.

Its subcellular location is the mitochondrion inner membrane. It carries out the reaction succinyl-CoA + glycine + H(+) = 5-aminolevulinate + CO2 + CoA. It functions in the pathway porphyrin-containing compound metabolism; protoporphyrin-IX biosynthesis; 5-aminolevulinate from glycine: step 1/1. Catalyzes the pyridoxal 5'-phosphate (PLP)-dependent condensation of succinyl-CoA and glycine to form aminolevulinic acid (ALA), with CoA and CO2 as by-products. This Opsanus tau (Oyster toadfish) protein is 5-aminolevulinate synthase, non-specific, mitochondrial (alas1).